The sequence spans 163 residues: Small ribosomal subunit protein eS10A (163 aa).

The interval 92–163 (LTQTTRSNAV…GFGRASRYDN (72 aa)) is disordered. Over residues 105–116 (GGPGGPGGGFGG) the composition is skewed to gly residues.

Belongs to the eukaryotic ribosomal protein eS10 family.

It is found in the cytoplasm. The polypeptide is Small ribosomal subunit protein eS10A (RpS10a) (Drosophila melanogaster (Fruit fly)).